Consider the following 184-residue polypeptide: ATP synthase subunit b, chloroplastic (184 aa).

The chain crosses the membrane as a helical span at residues 27–49; the sequence is LATNPINLSVVLGVLIFFGKGVL.

The protein belongs to the ATPase B chain family. In terms of assembly, F-type ATPases have 2 components, F(1) - the catalytic core - and F(0) - the membrane proton channel. F(1) has five subunits: alpha(3), beta(3), gamma(1), delta(1), epsilon(1). F(0) has four main subunits: a(1), b(1), b'(1) and c(10-14). The alpha and beta chains form an alternating ring which encloses part of the gamma chain. F(1) is attached to F(0) by a central stalk formed by the gamma and epsilon chains, while a peripheral stalk is formed by the delta, b and b' chains.

The protein localises to the plastid. Its subcellular location is the chloroplast thylakoid membrane. Functionally, f(1)F(0) ATP synthase produces ATP from ADP in the presence of a proton or sodium gradient. F-type ATPases consist of two structural domains, F(1) containing the extramembraneous catalytic core and F(0) containing the membrane proton channel, linked together by a central stalk and a peripheral stalk. During catalysis, ATP synthesis in the catalytic domain of F(1) is coupled via a rotary mechanism of the central stalk subunits to proton translocation. Component of the F(0) channel, it forms part of the peripheral stalk, linking F(1) to F(0). The sequence is that of ATP synthase subunit b, chloroplastic from Citrus sinensis (Sweet orange).